Consider the following 228-residue polypeptide: Phosphoglycolate phosphatase (228 aa).

Asp9 (nucleophile) is an active-site residue. Residues Asp9 and Asp11 each coordinate Mg(2+). Substrate is bound at residue Lys151. Mg(2+)-binding residues include Asp174 and Asp178.

Belongs to the archaeal SPP-like hydrolase family. Mg(2+) is required as a cofactor.

It carries out the reaction 2-phosphoglycolate + H2O = glycolate + phosphate. Its function is as follows. Catalyzes the dephosphorylation of 2-phosphoglycolate. This is Phosphoglycolate phosphatase from Pyrobaculum neutrophilum (strain DSM 2338 / JCM 9278 / NBRC 100436 / V24Sta) (Thermoproteus neutrophilus).